The sequence spans 196 residues: Translation initiation factor IF-3 (196 aa).

It belongs to the IF-3 family. In terms of assembly, monomer.

The protein localises to the cytoplasm. In terms of biological role, IF-3 binds to the 30S ribosomal subunit and shifts the equilibrium between 70S ribosomes and their 50S and 30S subunits in favor of the free subunits, thus enhancing the availability of 30S subunits on which protein synthesis initiation begins. In Wigglesworthia glossinidia brevipalpis, this protein is Translation initiation factor IF-3.